Reading from the N-terminus, the 164-residue chain is Thiol peroxidase (164 aa).

One can recognise a Thioredoxin domain in the interval valine 18–asparagine 163. The active-site Cysteine sulfenic acid (-SOH) intermediate is the cysteine 60. Cysteine 60 and cysteine 93 are joined by a disulfide.

Belongs to the peroxiredoxin family. Tpx subfamily. Homodimer.

It carries out the reaction a hydroperoxide + [thioredoxin]-dithiol = an alcohol + [thioredoxin]-disulfide + H2O. Functionally, thiol-specific peroxidase that catalyzes the reduction of hydrogen peroxide and organic hydroperoxides to water and alcohols, respectively. Plays a role in cell protection against oxidative stress by detoxifying peroxides. The protein is Thiol peroxidase of Staphylococcus saprophyticus subsp. saprophyticus (strain ATCC 15305 / DSM 20229 / NCIMB 8711 / NCTC 7292 / S-41).